The chain runs to 138 residues: DASH complex subunit DAD2 (138 aa).

The segment covering 1–14 has biased composition (polar residues); sequence MSGFSSRPLSTHLR. 2 disordered regions span residues 1–25 and 116–138; these read MSGF…QGQS and PTEH…SGRG.

It belongs to the DASH complex DAD2 family. Component of the DASH complex consisting of ASK1, DAD1, DAD2, DAD3, DAD4, DAM1, DUO1, HSK3, SPC19 and SPC34, with a stoichiometry of one copy of each subunit per complex. Multiple DASH complexes oligomerize to form a ring that encircles spindle microtubules and organizes the rod-like NDC80 complexes of the outer kinetochore. DASH complex oligomerization strengthens microtubule attachments. On cytoplasmic microtubules, DASH complexes appear to form patches instead of rings.

The protein localises to the chromosome. The protein resides in the centromere. It localises to the kinetochore. It is found in the cytoplasm. Its subcellular location is the cytoskeleton. The protein localises to the spindle. The protein resides in the nucleus. Component of the DASH complex that connects microtubules with kinetochores and couples microtubule depolymerisation to chromosome movement; it is involved in retrieving kinetochores to the spindle poles before their re-orientation on the spindle in early mitosis and allows microtubule depolymerization to pull chromosomes apart and resist detachment during anaphase. Kinetochores, consisting of a centromere-associated inner segment and a microtubule-contacting outer segment, play a crucial role in chromosome segregation by mediating the physical connection between centromeric DNA and microtubules. Kinetochores also serve as an input point for the spindle assembly checkpoint, which delays anaphase until all chromosomes have bioriented on the mitotic spindle. The protein is DASH complex subunit DAD2 of Chaetomium thermophilum (strain DSM 1495 / CBS 144.50 / IMI 039719) (Thermochaetoides thermophila).